We begin with the raw amino-acid sequence, 255 residues long: Small ribosomal subunit protein uS2 (255 aa).

The interval 230–255 is disordered; the sequence is QSSSGRDLGASSEVPVEPALEEAAEG.

It belongs to the universal ribosomal protein uS2 family.

The chain is Small ribosomal subunit protein uS2 from Rhizobium etli (strain CIAT 652).